The sequence spans 439 residues: MLTYKQRQSLNHAICDYVRQNEGSDELLVQLESVLLPNGSDVIPQDPNLLERKWNSIVRLQSKIMELEKNCEELQKSIDEQQSSTNQISNASSDWCPRDTPSFQITLDASITALCLHPSLPIIFIGLDSGKLLRYDILNVELPLQSTMAHMDGITSISISLPNENGRPAYLATTSKDLNTKIWELELDSTLSHIKTLAGHEHTVSDCQFFERGADLLLATCSRDLYLKIWDISNGWCIKSFQPHTQWIRSLHVHGEFVLTGSNDSAIRLTHWPSGNGLSMGIGHDFPVEKVLILIPDPQHLQPQYQPLGFQHVASASRDGTIRLWKVSLPKFIPHRPPRPNPLDTTFKVIAVLTDHNSWVRDLRQFNDMLFSCSDDGSVKCWSLDWTNLSTTTCKKSWDLSNKGFQNCLTLDNIAFTGLPSRKLLFSGSSEGTLTSFMR.

Residues N55 to N90 are a coiled coil. WD repeat units follow at residues T106 to Q145, A149 to H193, G199 to S240, P243 to I282, I295 to H335, D355 to T392, and N402 to M438.

It belongs to the WD repeat LIS1/nudF family. In terms of assembly, self-associates. Interacts with NDL1 and dynein.

Its subcellular location is the cytoplasm. The protein resides in the cytoskeleton. It localises to the spindle pole. Functionally, positively regulates the activity of the minus-end directed microtubule motor protein dynein. Plays a central role in positioning the mitotic spindle at the bud neck during cell division. Targets cytoplasmic dynein to microtubule plus ends, thereby promoting dynein-mediated microtubule sliding along the bud cortex and consequently the movement of the mitotic spindle to the bud neck. In Kluyveromyces lactis (strain ATCC 8585 / CBS 2359 / DSM 70799 / NBRC 1267 / NRRL Y-1140 / WM37) (Yeast), this protein is Nuclear distribution protein PAC1.